A 249-amino-acid polypeptide reads, in one-letter code: Methionine aminopeptidase 2 (249 aa).

Position 76 (His-76) interacts with substrate. Positions 94, 105, and 168 each coordinate a divalent metal cation. Residue His-175 participates in substrate binding. A divalent metal cation is bound by residues Glu-202 and Glu-233.

In terms of assembly, monomer. Co(2+) serves as cofactor. Requires Zn(2+) as cofactor. Mn(2+) is required as a cofactor. It depends on Fe(2+) as a cofactor.

Its subcellular location is the cytoplasm. The catalysed reaction is Release of N-terminal amino acids, preferentially methionine, from peptides and arylamides.. Its function is as follows. Removes the N-terminal methionine from nascent proteins. The N-terminal methionine is often cleaved when the second residue in the primary sequence is small and uncharged (Met-Ala-, Cys, Gly, Pro, Ser, Thr, or Val). Requires deformylation of the N(alpha)-formylated initiator methionine before it can be hydrolyzed. This chain is Methionine aminopeptidase 2, found in Bacillus subtilis (strain 168).